A 237-amino-acid polypeptide reads, in one-letter code: Eukaryotic translation initiation factor 3 subunit J (237 aa).

The tract at residues 20–64 is disordered; it reads ANNINKWEGEDDDEDVKESWEDEEEKKDEEKPTKTEAPAKTKPNK. Residues 28-46 are compositionally biased toward acidic residues; it reads GEDDDEDVKESWEDEEEKK. Positions 47–58 are enriched in basic and acidic residues; the sequence is DEEKPTKTEAPA. Residues 63–115 are a coiled coil; sequence NKVLKAKLLEQECLEKEEEAKRLANMSTEEKLAEKLRLQKIQEESDLKSALET.

This sequence belongs to the eIF-3 subunit J family. In terms of assembly, component of the eukaryotic translation initiation factor 3 (eIF-3) complex. The eIF-3 complex interacts with pix.

It is found in the cytoplasm. In terms of biological role, component of the eukaryotic translation initiation factor 3 (eIF-3) complex, which is involved in protein synthesis of a specialized repertoire of mRNAs and, together with other initiation factors, stimulates binding of mRNA and methionyl-tRNAi to the 40S ribosome. The eIF-3 complex specifically targets and initiates translation of a subset of mRNAs involved in cell proliferation. This Drosophila grimshawi (Hawaiian fruit fly) protein is Eukaryotic translation initiation factor 3 subunit J.